A 64-amino-acid chain; its full sequence is MAKTKGIRISITLECTSCKNNNNKRSTGISRYMTQKNRRNTPNRLELKKFCSHCNQSTIHKEIK.

The protein belongs to the bacterial ribosomal protein bL33 family.

The protein localises to the plastid. The protein resides in the chloroplast. In Mesostigma viride (Green alga), this protein is Large ribosomal subunit protein bL33c (rpl33).